The sequence spans 807 residues: Glycerol-3-phosphate acyltransferase (807 aa).

Positions 308-313 (CHRSHM) match the HXXXXD motif motif.

It belongs to the GPAT/DAPAT family.

The protein resides in the cell inner membrane. The catalysed reaction is sn-glycerol 3-phosphate + an acyl-CoA = a 1-acyl-sn-glycero-3-phosphate + CoA. Its pathway is phospholipid metabolism; CDP-diacylglycerol biosynthesis; CDP-diacylglycerol from sn-glycerol 3-phosphate: step 1/3. The polypeptide is Glycerol-3-phosphate acyltransferase (Shewanella baltica (strain OS195)).